Reading from the N-terminus, the 275-residue chain is MSSTPSNQNIIPLIKKESIVSLFEKGTRQDGRKLTDYRPLSITLDYAKKADGSALVKLGTTMVLAGTKLEIDKPYEDTPNQGNLIVNVELLPLAYETFEPGPPDENAIELARVVDRSLRDSKALDLTKLVIEPGKSVWTVWLDVYVLDYGGNVLDACTLASVAALHNTKVYKVEQDSNGFRVNKNEVVGKLPLNHPVVTVSIAKVDKYLIVDPDLDEESIMDTKVSFSYTPDLKIVGIQKSGKGSMSLQDIDQAENTARLVAVKLLEELKKQLGI.

It belongs to the RNase PH family. Rrp42 subfamily. As to quaternary structure, component of the archaeal exosome complex. Forms a hexameric ring-like arrangement composed of 3 Rrp41-Rrp42 heterodimers. The hexameric ring associates with a trimer of Rrp4 and/or Csl4 subunits.

The protein resides in the cytoplasm. Non-catalytic component of the exosome, which is a complex involved in RNA degradation. Contributes to the structuring of the Rrp41 active site. In Saccharolobus islandicus (strain M.16.27) (Sulfolobus islandicus), this protein is Exosome complex component Rrp42.